Here is a 138-residue protein sequence, read N- to C-terminus: MPARILVVQEDPDIAAYLVSLFRQAGYKADAATEGPDAVEMVQASRPDVVFLDLALPQRWGPRFYSWMVTQPGCGNVPVVLVTDFAGLELMVPNAVGTVDKPFDPVLLLALVDRALATYAKGTPDTPDTTGAPAPDNR.

The region spanning 4–116 is the Response regulatory domain; it reads RILVVQEDPD…LLLALVDRAL (113 aa). Residues D13 and D53 each carry the 4-aspartylphosphate modification.

May be involved in regulation of gene transcription. Belongs to the family of response regulators, and members of this family involved in the regulation of gene transcription are two-domain proteins. This protein contains only the N-terminal phosphorylation domain and not the C-terminal DNA-binding domain but it may bind to Rrf2 protein and the latter may bind to DNA. The protein is Protein Rrf1 (rrf1) of Nitratidesulfovibrio vulgaris (strain ATCC 29579 / DSM 644 / CCUG 34227 / NCIMB 8303 / VKM B-1760 / Hildenborough) (Desulfovibrio vulgaris).